The following is a 501-amino-acid chain: Splicing factor 3A subunit 3 (501 aa).

M1 bears the N-acetylmethionine mark. Residues S54 and S121 each carry the phosphoserine modification. The Nuclear localization signal motif lies at 175–179 (KERKN). Residues S295 and S299 each carry the phosphoserine modification. Over residues 343-354 (ENVQRKQARTGE) the composition is skewed to basic and acidic residues. Positions 343–374 (ENVQRKQARTGEEREEEEEEQISESESEDEEN) are disordered. Acidic residues predominate over residues 355–374 (EREEEEEEQISESESEDEEN). S365, S367, and S369 each carry phosphoserine. A Matrin-type zinc finger spans residues 406–437 (YNCEICGNYTYRGPKAFQRHFAEWRHAHGMRC). T475 bears the Phosphothreonine mark.

This sequence belongs to the SF3A3 family. In terms of assembly, component of the 17S U2 SnRNP complex, a ribonucleoprotein complex that contains small nuclear RNA (snRNA) U2 and a number of specific proteins. Part of the SF3A subcomplex of the 17S U2 SnRNP complex which is composed of three subunits; SF3A3/SAP61, SF3A2/SAP62 and SF3A1/SAP114. SF3A associates with the splicing factor SF3B and a 12S RNA unit to form the mature 17S U2 small nuclear ribonucleoprotein complex (17S U2 snRNP). Identified in the spliceosome 'E' complex, a precursor of the spliceosome 'A' complex. Identified in the spliceosome 'A' and 'B' complexes. Identified in the spliceosome 'C' complex. In terms of tissue distribution, ubiquitous.

It is found in the nucleus speckle. It localises to the nucleus. Its function is as follows. Component of the 17S U2 SnRNP complex of the spliceosome, a large ribonucleoprotein complex that removes introns from transcribed pre-mRNAs. The 17S U2 SnRNP complex (1) directly participates in early spliceosome assembly and (2) mediates recognition of the intron branch site during pre-mRNA splicing by promoting the selection of the pre-mRNA branch-site adenosine, the nucleophile for the first step of splicing. Within the 17S U2 SnRNP complex, SF3A3 is part of the SF3A subcomplex that contributes to the assembly of the 17S U2 snRNP, and the subsequent assembly of the pre-spliceosome 'E' complex and the pre-catalytic spliceosome 'A' complex. Involved in pre-mRNA splicing as a component of pre-catalytic spliceosome 'B' complexes. This chain is Splicing factor 3A subunit 3 (SF3A3), found in Homo sapiens (Human).